Consider the following 85-residue polypeptide: Large ribosomal subunit protein bL27 (85 aa).

Residues 1-22 (MAKTKAGGSTRNGRDSKGRRLG) are disordered.

This sequence belongs to the bacterial ribosomal protein bL27 family.

The chain is Large ribosomal subunit protein bL27 from Mycoplasmopsis pulmonis (strain UAB CTIP) (Mycoplasma pulmonis).